A 66-amino-acid chain; its full sequence is KEGYIVNYHDGCKYACVKLGDNDYCLRECKLRYGKGAGGYCYAFGCWCTHLYEQAVVWPLPKKRCN.

The LCN-type CS-alpha/beta domain occupies 1-66 (KEGYIVNYHD…VWPLPKKRCN (66 aa)). Intrachain disulfides connect cysteine 12-cysteine 65, cysteine 16-cysteine 41, cysteine 25-cysteine 46, and cysteine 29-cysteine 48.

As to expression, expressed by the venom gland.

The protein localises to the secreted. In terms of biological role, beta toxins bind voltage-independently at site-4 of sodium channels (Nav) and shift the voltage of activation toward more negative potentials thereby affecting sodium channel activation and promoting spontaneous and repetitive firing. This toxin acts on human Nav1.1/SCN1A, Nav1.2/SCN2A, Nav1.4/SCN4A and Nav1.6/SCN8A voltage-gated sodium channels. Also, it reduces the peak of sodium currents in Nav1.5/SCN5A at all potentials. In vivo, is lethal to mice when intraperitoneally injected at a dose of 5ug. No activity is observed when injected into crickets or woodlice. This chain is Beta-mammal toxin Co2, found in Centruroides ornatus (Scorpion).